A 152-amino-acid polypeptide reads, in one-letter code: Ribonuclease H (152 aa).

The RNase H type-1 domain occupies 6 to 147 (KKNNVIAYTD…ADELANKAIA (142 aa)). Mg(2+)-binding residues include aspartate 15, glutamate 53, aspartate 75, and aspartate 139.

Belongs to the RNase H family. As to quaternary structure, monomer. Mg(2+) serves as cofactor.

Its subcellular location is the cytoplasm. It carries out the reaction Endonucleolytic cleavage to 5'-phosphomonoester.. Functionally, endonuclease that specifically degrades the RNA of RNA-DNA hybrids. In Francisella philomiragia subsp. philomiragia (strain ATCC 25017 / CCUG 19701 / FSC 153 / O#319-036), this protein is Ribonuclease H.